Here is a 159-residue protein sequence, read N- to C-terminus: Ribosomal RNA large subunit methyltransferase H (159 aa).

S-adenosyl-L-methionine contacts are provided by residues leucine 76, glycine 108, and 127 to 132 (FSKMTL).

Belongs to the RNA methyltransferase RlmH family. Homodimer.

It localises to the cytoplasm. The enzyme catalyses pseudouridine(1915) in 23S rRNA + S-adenosyl-L-methionine = N(3)-methylpseudouridine(1915) in 23S rRNA + S-adenosyl-L-homocysteine + H(+). Functionally, specifically methylates the pseudouridine at position 1915 (m3Psi1915) in 23S rRNA. This is Ribosomal RNA large subunit methyltransferase H from Bacillus cytotoxicus (strain DSM 22905 / CIP 110041 / 391-98 / NVH 391-98).